A 424-amino-acid chain; its full sequence is Sulfatase ppz1 (424 aa).

Positions 13, 203, and 204 each coordinate Ca(2+).

Belongs to the sulfatase family. Requires Ca(2+) as cofactor.

In terms of biological role, sulfatase; part of the gene cluster that mediates the biosynthesis of pyrrolopyrazines, secondary metabolites showing insecticidal activity. The role of ppz1 within the pathway has still to be determined. The single multifunctional NRPS ppzA is sufficient to produce peramine via condensation of 1-pyrroline-5-carboxylate and arginine, N-methylation of the alpha-amino group of arginine and reduction of the thioester and the cyclization to form an iminium ion resulting in release from the peptide synthetase. Deprotonation of this intermediate and oxidation of the pyrroline ring would give rise to peramine. In Epichloe species that produce only peramine, the peramine synthetase gene is not localized in a gene cluster, in contrast to Metarhizium species that contain additional pyrrolopyrazine biosynthesis genes. The 2-oxoglutarate-Fe(II) type oxidoreductase ppzC hydroxylates peramine to yield the newly identified compound 8-hydroxyperamine whereas ppzD converts L-proline into trans-4-hydroxy-L-proline, a precursor of peramine biosynthesis. This is Sulfatase ppz1 from Metarhizium majus (strain ARSEF 297).